Reading from the N-terminus, the 203-residue chain is Large ribosomal subunit protein uL6 (203 aa).

This sequence belongs to the universal ribosomal protein uL6 family. Part of the 50S ribosomal subunit.

Its function is as follows. This protein binds to the 23S rRNA, and is important in its secondary structure. It is located near the subunit interface in the base of the L7/L12 stalk, and near the tRNA binding site of the peptidyltransferase center. The chain is Large ribosomal subunit protein uL6 from Hyphomonas neptunium (strain ATCC 15444).